A 422-amino-acid chain; its full sequence is Adenylosuccinate synthetase (422 aa).

GTP contacts are provided by residues 11-17 (GDEGKGK) and 39-41 (GHT). Asp12 (proton acceptor) is an active-site residue. Residues Asp12 and Gly39 each coordinate Mg(2+). IMP is bound by residues 12–15 (DEGK), 37–40 (NAGH), Thr129, Arg143, Asn219, Thr234, and Arg298. His40 (proton donor) is an active-site residue. 294 to 300 (VTTGRRR) contributes to the substrate binding site. GTP contacts are provided by residues Arg300, 326-328 (KLD), and 409-411 (GTG).

Belongs to the adenylosuccinate synthetase family. Homodimer. Mg(2+) serves as cofactor.

The protein localises to the cytoplasm. It carries out the reaction IMP + L-aspartate + GTP = N(6)-(1,2-dicarboxyethyl)-AMP + GDP + phosphate + 2 H(+). It functions in the pathway purine metabolism; AMP biosynthesis via de novo pathway; AMP from IMP: step 1/2. Its function is as follows. Plays an important role in the de novo pathway and in the salvage pathway of purine nucleotide biosynthesis. Catalyzes the first committed step in the biosynthesis of AMP from IMP. This chain is Adenylosuccinate synthetase, found in Blastomyces gilchristii (strain SLH14081) (Blastomyces dermatitidis).